A 370-amino-acid polypeptide reads, in one-letter code: Chloromuconate cycloisomerase (370 aa).

The active-site Proton acceptor is the Lys-165. Mn(2+) is bound by residues Asp-194, Glu-220, and Asp-245. The Proton donor role is filled by Glu-323.

Belongs to the mandelate racemase/muconate lactonizing enzyme family. The cofactor is Mn(2+).

The catalysed reaction is 2-[(2R)-2-chloro-2,5-dihydro-5-oxofuryl]acetate = 3-chloro-cis,cis-muconate + H(+). The protein operates within aromatic compound metabolism; 3-chlorocatechol degradation. The chain is Chloromuconate cycloisomerase (tfdD) from Delftia acidovorans (Pseudomonas acidovorans).